The sequence spans 166 residues: Lipoprotein signal peptidase (166 aa).

3 helical membrane passes run 12 to 32 (WLWL…LILQ), 70 to 90 (WFFA…MYRS), and 102 to 122 (ALII…GFVV). Active-site residues include Asp123 and Asp141. A helical membrane pass occupies residues 137-157 (FNLADTAICIGAALIVLEGFL).

The protein belongs to the peptidase A8 family.

It localises to the cell inner membrane. The catalysed reaction is Release of signal peptides from bacterial membrane prolipoproteins. Hydrolyzes -Xaa-Yaa-Zaa-|-(S,diacylglyceryl)Cys-, in which Xaa is hydrophobic (preferably Leu), and Yaa (Ala or Ser) and Zaa (Gly or Ala) have small, neutral side chains.. It participates in protein modification; lipoprotein biosynthesis (signal peptide cleavage). Its function is as follows. This protein specifically catalyzes the removal of signal peptides from prolipoproteins. This is Lipoprotein signal peptidase from Salmonella typhi.